The following is a 577-amino-acid chain: Pentatricopeptide repeat-containing protein At2g01390 (577 aa).

PPR repeat units follow at residues 121 to 155, 156 to 190, 191 to 225, 226 to 260, 261 to 295, 382 to 416, 417 to 451, 452 to 482, 485 to 519, and 520 to 554; these read DHFT…GVLI, DTVT…GCEP, TVVS…RVSP, NCHT…GVQP, DKAA…GVVL, DSFV…GIHL, KKSA…QHSL, GCYQ…LPDD, GVAA…EIMP, and SLGT…LVAS.

The protein belongs to the PPR family. P subfamily.

The sequence is that of Pentatricopeptide repeat-containing protein At2g01390 from Arabidopsis thaliana (Mouse-ear cress).